A 338-amino-acid chain; its full sequence is Ribosomal RNA small subunit methyltransferase H (338 aa).

S-adenosyl-L-methionine-binding positions include 53–55, aspartate 72, tyrosine 99, aspartate 123, and glutamine 130; that span reads GGH. Disordered stretches follow at residues 276-297 and 304-323; these read EITP…PGMG and TRGA…RSAP.

Belongs to the methyltransferase superfamily. RsmH family.

It localises to the cytoplasm. The enzyme catalyses cytidine(1402) in 16S rRNA + S-adenosyl-L-methionine = N(4)-methylcytidine(1402) in 16S rRNA + S-adenosyl-L-homocysteine + H(+). Its function is as follows. Specifically methylates the N4 position of cytidine in position 1402 (C1402) of 16S rRNA. The polypeptide is Ribosomal RNA small subunit methyltransferase H (Rhodococcus jostii (strain RHA1)).